The following is a 636-amino-acid chain: Chaperone protein DnaK (636 aa).

At Thr-203 the chain carries Phosphothreonine; by autocatalysis. Residues 602–636 (VYGKQQEGAPAQEEPSAEGKKADDEGTVEGEFREV) form a disordered region. The span at 618–636 (AEGKKADDEGTVEGEFREV) shows a compositional bias: basic and acidic residues.

The protein belongs to the heat shock protein 70 family.

Its function is as follows. Acts as a chaperone. The polypeptide is Chaperone protein DnaK (Dehalococcoides mccartyi (strain ATCC BAA-2100 / JCM 16839 / KCTC 5957 / BAV1)).